The primary structure comprises 262 residues: MILDDIVGVKKKELEIRKESKPLKDIVDELSRIDEFKIRNFKGALINDDISIIGEIKRASPSKGIIDRKFEFEDICSTYETLDIDAVSVLTEQHYFKGKDEYLKKAKEFISKPVLRKDFIVDEYQVYESKLLGADAVLLIVRILKENLDKFYKIASSIGLQCIVEVHNKSELDIALKIEPEIIGINNRNLENFTVDLKNTENLINYMPENTAVISESGIKTSMDFKYIKSLPINGVLIGEGLMKKIYDIESIKKFIDSVKSG.

It belongs to the TrpC family.

It carries out the reaction 1-(2-carboxyphenylamino)-1-deoxy-D-ribulose 5-phosphate + H(+) = (1S,2R)-1-C-(indol-3-yl)glycerol 3-phosphate + CO2 + H2O. The protein operates within amino-acid biosynthesis; L-tryptophan biosynthesis; L-tryptophan from chorismate: step 4/5. The chain is Indole-3-glycerol phosphate synthase from Clostridium kluyveri (strain NBRC 12016).